A 93-amino-acid polypeptide reads, in one-letter code: MAHKKAGGSSRNGRDSEGRRLGVKKFGNEAVIAGNIIVRQRGTRWHPGTNVGIGRDHTLFALTDGRVQFATKQGRAYVTVVPAQDAPAREAAE.

The segment at 1-22 (MAHKKAGGSSRNGRDSEGRRLG) is disordered.

The protein belongs to the bacterial ribosomal protein bL27 family.

This Methylobacterium sp. (strain 4-46) protein is Large ribosomal subunit protein bL27.